The primary structure comprises 473 residues: Photosystem II CP43 reaction center protein (473 aa).

The propeptide occupies 1–14 (MKILYSLRRFYHVE). N-acetylthreonine is present on threonine 15. Threonine 15 carries the phosphothreonine modification. A run of 5 helical transmembrane segments spans residues 69–93 (LFEV…PHLA), 134–155 (LLGP…KDRN), 178–200 (KALY…RKIT), 255–275 (KPFA…LSYS), and 291–312 (WFNN…ASQA). A [CaMn4O5] cluster-binding site is contributed by glutamate 367. Residues 447–471 (RARAAAAGFEKGIDRDLEPVLYMNP) form a helical membrane-spanning segment.

Belongs to the PsbB/PsbC family. PsbC subfamily. PSII is composed of 1 copy each of membrane proteins PsbA, PsbB, PsbC, PsbD, PsbE, PsbF, PsbH, PsbI, PsbJ, PsbK, PsbL, PsbM, PsbT, PsbX, PsbY, PsbZ, Psb30/Ycf12, at least 3 peripheral proteins of the oxygen-evolving complex and a large number of cofactors. It forms dimeric complexes. It depends on Binds multiple chlorophylls and provides some of the ligands for the Ca-4Mn-5O cluster of the oxygen-evolving complex. It may also provide a ligand for a Cl- that is required for oxygen evolution. PSII binds additional chlorophylls, carotenoids and specific lipids. as a cofactor.

The protein localises to the plastid. It is found in the chloroplast thylakoid membrane. In terms of biological role, one of the components of the core complex of photosystem II (PSII). It binds chlorophyll and helps catalyze the primary light-induced photochemical processes of PSII. PSII is a light-driven water:plastoquinone oxidoreductase, using light energy to abstract electrons from H(2)O, generating O(2) and a proton gradient subsequently used for ATP formation. The sequence is that of Photosystem II CP43 reaction center protein from Hordeum vulgare (Barley).